Reading from the N-terminus, the 323-residue chain is MIRSVVRGMGAALPRRIMKNADFEGMVETSDEWIVQRTGIRQRHIAADDETTASLGEAAARAALANAGLTPGDIDLIVLATSTPNNTFPATAVEIQNRLGMHHGFAFDMQAVCSGFVYAVTTADLYIRGGLAKRVLVIGSETFSRILDWNDRSTCVLFGDGAGALILEAGEGAGTIADRGVLAASLRSDGVHKDKLFVDGGPSTTGTVGHLRMEGREVFKHAVGMITDVIEATFSAAGISADDLDWFVPHQANKRIIDASAKKLGIAEQKVVVTVDLHGNTSAASVPLALSVAVADGRIKKGDLVLLEAMGGGFTWGAVLVRW.

Active-site residues include cysteine 113 and histidine 250. Positions 251-255 (QANKR) are ACP-binding. Residue asparagine 280 is part of the active site.

Belongs to the thiolase-like superfamily. FabH family. In terms of assembly, homodimer.

It is found in the cytoplasm. It catalyses the reaction malonyl-[ACP] + acetyl-CoA + H(+) = 3-oxobutanoyl-[ACP] + CO2 + CoA. The protein operates within lipid metabolism; fatty acid biosynthesis. In terms of biological role, catalyzes the condensation reaction of fatty acid synthesis by the addition to an acyl acceptor of two carbons from malonyl-ACP. Catalyzes the first condensation reaction which initiates fatty acid synthesis and may therefore play a role in governing the total rate of fatty acid production. Possesses both acetoacetyl-ACP synthase and acetyl transacylase activities. Its substrate specificity determines the biosynthesis of branched-chain and/or straight-chain of fatty acids. This chain is Beta-ketoacyl-[acyl-carrier-protein] synthase III, found in Mesorhizobium japonicum (strain LMG 29417 / CECT 9101 / MAFF 303099) (Mesorhizobium loti (strain MAFF 303099)).